Reading from the N-terminus, the 274-residue chain is Diaminopimelate epimerase (274 aa).

Substrate is bound by residues Asn11, Gln44, and Asn64. The active-site Proton donor is Cys73. Substrate-binding positions include 74 to 75 (GN), Asn157, Asn190, and 208 to 209 (ER). Cys217 (proton acceptor) is an active-site residue. 218-219 (GS) lines the substrate pocket.

The protein belongs to the diaminopimelate epimerase family. In terms of assembly, homodimer.

It is found in the cytoplasm. The enzyme catalyses (2S,6S)-2,6-diaminopimelate = meso-2,6-diaminopimelate. Its pathway is amino-acid biosynthesis; L-lysine biosynthesis via DAP pathway; DL-2,6-diaminopimelate from LL-2,6-diaminopimelate: step 1/1. Functionally, catalyzes the stereoinversion of LL-2,6-diaminopimelate (L,L-DAP) to meso-diaminopimelate (meso-DAP), a precursor of L-lysine and an essential component of the bacterial peptidoglycan. The protein is Diaminopimelate epimerase of Actinobacillus pleuropneumoniae serotype 3 (strain JL03).